Here is a 109-residue protein sequence, read N- to C-terminus: MDMDLNNRLTEDETLEQAYDIFLELAADNLDPADVLLFNLQFEERGGAELFDPAEDWLEHVDFDLNPDFFAEVVIGLADSEDGEINDVFARILLCREKDHKLCHIIWRE.

It belongs to the putative dsDNA mimic protein family.

In terms of biological role, may act as a double-stranded DNA (dsDNA) mimic. Probably regulates the activity of a dsDNA-binding protein. This Escherichia coli O45:K1 (strain S88 / ExPEC) protein is Putative double-stranded DNA mimic protein YciU.